A 209-amino-acid chain; its full sequence is dTTP/UTP pyrophosphatase (209 aa).

Catalysis depends on aspartate 79, which acts as the Proton acceptor.

Belongs to the Maf family. YhdE subfamily. A divalent metal cation is required as a cofactor.

The protein resides in the cytoplasm. It catalyses the reaction dTTP + H2O = dTMP + diphosphate + H(+). The enzyme catalyses UTP + H2O = UMP + diphosphate + H(+). Functionally, nucleoside triphosphate pyrophosphatase that hydrolyzes dTTP and UTP. May have a dual role in cell division arrest and in preventing the incorporation of modified nucleotides into cellular nucleic acids. The chain is dTTP/UTP pyrophosphatase from Bradyrhizobium diazoefficiens (strain JCM 10833 / BCRC 13528 / IAM 13628 / NBRC 14792 / USDA 110).